A 202-amino-acid polypeptide reads, in one-letter code: Putative 3-methyladenine DNA glycosylase (202 aa).

Belongs to the DNA glycosylase MPG family.

The protein is Putative 3-methyladenine DNA glycosylase of Staphylococcus aureus (strain Mu3 / ATCC 700698).